The sequence spans 229 residues: MHLVSVIQRGVWAVLLWPNLLASSVPLDCREEQGILSRCPSISQEKLLDRVIEHAELIYRVSEESCSLYEDMFIPLQFQRNQVGYACITKTLPVPSSKNEIQQISDKWLLHSVLMLVQSWIEPLVYLQTSLDRYNAAPEMLLNKTKWVSEKLISLEQGVVVLIKKMLDEGMLTINHSEQGLLQNGVQPQMLESVMRDYTLLSCFKKDAHKMEAFLKLLKCRQTDRYNCS.

The signal sequence occupies residues 1–24; sequence MHLVSVIQRGVWAVLLWPNLLASS. 3 disulfides stabilise this stretch: C29–C39, C87–C203, and C220–C228. N143 and N175 each carry an N-linked (GlcNAc...) asparagine glycan.

This sequence belongs to the somatotropin/prolactin family.

The protein localises to the secreted. The chain is Somatolactin from Cyclopterus lumpus (Lumpsucker).